The primary structure comprises 117 residues: UPF0342 protein BLi01058/BL02870 (117 aa).

The protein belongs to the UPF0342 family.

This is UPF0342 protein BLi01058/BL02870 from Bacillus licheniformis (strain ATCC 14580 / DSM 13 / JCM 2505 / CCUG 7422 / NBRC 12200 / NCIMB 9375 / NCTC 10341 / NRRL NRS-1264 / Gibson 46).